The following is a 148-amino-acid chain: 3-dehydroquinate dehydratase (148 aa).

The active-site Proton acceptor is Tyr24. Substrate-binding residues include Asn75, His81, and Asp88. Residue His101 is the Proton donor of the active site. Residues 102-103 and Arg112 contribute to the substrate site; that span reads LS.

The protein belongs to the type-II 3-dehydroquinase family. As to quaternary structure, homododecamer.

It carries out the reaction 3-dehydroquinate = 3-dehydroshikimate + H2O. The protein operates within metabolic intermediate biosynthesis; chorismate biosynthesis; chorismate from D-erythrose 4-phosphate and phosphoenolpyruvate: step 3/7. Its function is as follows. Catalyzes a trans-dehydration via an enolate intermediate. The polypeptide is 3-dehydroquinate dehydratase (Bartonella henselae (strain ATCC 49882 / DSM 28221 / CCUG 30454 / Houston 1) (Rochalimaea henselae)).